Consider the following 397-residue polypeptide: Bifunctional enzyme IspD/IspF (397 aa).

The segment at 1–236 (MSIAAIILAA…LKGMQIFPDI (236 aa)) is 2-C-methyl-D-erythritol 4-phosphate cytidylyltransferase. The segment at 237-397 (RTGNGYDVHS…TVIYPGEIPK (161 aa)) is 2-C-methyl-D-erythritol 2,4-cyclodiphosphate synthase. Positions 243 and 245 each coordinate a divalent metal cation. 4-CDP-2-C-methyl-D-erythritol 2-phosphate contacts are provided by residues 243-245 (DVH) and 269-270 (HS). His277 contacts a divalent metal cation. 4-CDP-2-C-methyl-D-erythritol 2-phosphate contacts are provided by residues 291-293 (DIG), 367-370 (TTNE), Phe374, and Arg377.

It in the N-terminal section; belongs to the IspD/TarI cytidylyltransferase family. IspD subfamily. In the C-terminal section; belongs to the IspF family. It depends on a divalent metal cation as a cofactor.

It carries out the reaction 2-C-methyl-D-erythritol 4-phosphate + CTP + H(+) = 4-CDP-2-C-methyl-D-erythritol + diphosphate. The enzyme catalyses 4-CDP-2-C-methyl-D-erythritol 2-phosphate = 2-C-methyl-D-erythritol 2,4-cyclic diphosphate + CMP. It participates in isoprenoid biosynthesis; isopentenyl diphosphate biosynthesis via DXP pathway; isopentenyl diphosphate from 1-deoxy-D-xylulose 5-phosphate: step 2/6. Its pathway is isoprenoid biosynthesis; isopentenyl diphosphate biosynthesis via DXP pathway; isopentenyl diphosphate from 1-deoxy-D-xylulose 5-phosphate: step 4/6. Functionally, bifunctional enzyme that catalyzes the formation of 4-diphosphocytidyl-2-C-methyl-D-erythritol from CTP and 2-C-methyl-D-erythritol 4-phosphate (MEP) (IspD), and catalyzes the conversion of 4-diphosphocytidyl-2-C-methyl-D-erythritol 2-phosphate (CDP-ME2P) to 2-C-methyl-D-erythritol 2,4-cyclodiphosphate (ME-CPP) with a corresponding release of cytidine 5-monophosphate (CMP) (IspF). The sequence is that of Bifunctional enzyme IspD/IspF from Bartonella bacilliformis (strain ATCC 35685 / KC583 / Herrer 020/F12,63).